The chain runs to 281 residues: CCAAT/enhancer-binding protein epsilon (281 aa).

The interval 1–30 (MSHGTYYECEPRGGQQPLEFSGGRAGPGEL) is disordered. Residue Lys-121 forms a Glycyl lysine isopeptide (Lys-Gly) (interchain with G-Cter in SUMO2) linkage. A Phosphoserine modification is found at Ser-181. The region spanning 204–267 (SLEYRLRRER…DTLRNLFRQI (64 aa)) is the bZIP domain. The segment at 208–245 (RLRRERNNIAVRKSRDKAKRRIMETQQKVLEYMAENER) is basic motif. The tract at residues 246–267 (LRNRVDQLTQELDTLRNLFRQI) is leucine-zipper.

It belongs to the bZIP family. C/EBP subfamily. In terms of assembly, binds DNA as a homodimer and as a heterodimer. Can form stable heterodimers with CEBPA, CEBPB and CEBPD. Interacts with GATA1 and SPI1. Interacts with SMARCD2. Post-translationally, phosphorylated.

Its subcellular location is the nucleus. In terms of biological role, transcriptional activator. C/EBP are DNA-binding proteins that recognize two different motifs: the CCAAT homology common to many promoters and the enhanced core homology common to many enhancers. Required for the promyelocyte-myelocyte transition in myeloid differentiation. The protein is CCAAT/enhancer-binding protein epsilon (Cebpe) of Mus musculus (Mouse).